The sequence spans 309 residues: Taste receptor type 2 member 46 (309 aa).

Met1 is a topological domain (extracellular). Residues 2-22 (ITFLPIIFSILIVVTFVIGNF) form a helical membrane-spanning segment. Over 23–46 (ANGFIALANSIEWFKRQKISFADQ) the chain is Cytoplasmic. The chain crosses the membrane as a helical span at residues 47–67 (ILTALAVSRVGLLWVLLLNWY). Residues 68-86 (ATELNPAFYSIEVRITAYN) lie on the Extracellular side of the membrane. Residues 87-107 (VWAVISHFSNWLATSLSIFYL) form a helical membrane-spanning segment. Residues 108–126 (LKIANFSNLIFLRLKRRVK) lie on the Cytoplasmic side of the membrane. A helical membrane pass occupies residues 127-147 (SVVLVILLGPLLFLVCHLFVI). At 148–178 (NMNQIIWTKEYEGNMTWKIKLRSAMYLSDTT) the chain is on the extracellular side. Asn161 is a glycosylation site (N-linked (GlcNAc...) asparagine). Residues 179–199 (VTILANLVPFTLTLISFLLLI) form a helical membrane-spanning segment. Residues 200–229 (CSLCKHLKKMQLHGKGSQDPSMKVHIKALQ) lie on the Cytoplasmic side of the membrane. A helical membrane pass occupies residues 230-250 (TVTSFLLLCAIYFLSVIMSVW). The Extracellular portion of the chain corresponds to 251 to 259 (SFESLENKP). A helical transmembrane segment spans residues 260–280 (VFMFCEAITFSYPSTHPFILI). Residues 281–309 (WGNKKLKQTFLSVLWHVRYWVKGEKPSSS) are Cytoplasmic-facing.

This sequence belongs to the G-protein coupled receptor T2R family.

The protein resides in the membrane. It localises to the cell projection. It is found in the cilium membrane. Receptor that may play a role in the perception of bitterness and is gustducin-linked. May play a role in sensing the chemical composition of the gastrointestinal content. The activity of this receptor may stimulate alpha gustducin, mediate PLC-beta-2 activation and lead to the gating of TRPM5. In airway epithelial cells, binding of bitter compounds increases the intracellular calcium ion concentration and stimulates ciliary beat frequency. This chain is Taste receptor type 2 member 46 (TAS2R46), found in Gorilla gorilla gorilla (Western lowland gorilla).